Here is a 283-residue protein sequence, read N- to C-terminus: MSKFLSQAAINTLRNTRLGSRQLVRSFAGISNTRNHRGAGHQEWGCGQSAERGLLELRMPVACRRSMFIQTQDTPNPESLKFLPGVDVLGKGNTYDFPHGTTAHSSPLAKLLFRVEGVKGVFFGADFITISKQEGAEWSLIKPEVFAVIMDFFASGLPVLNDAQPNADTEILEDDDETVMMIKELLDTRIRPTVQEDGGDIVFMGYEAGVVKLKMQGSCSSCPSSIVTLKNGVQNMLQFYIPEVESVEQVFDEADRMIDSEFERFEKNLKTLKQQGPSGGGPH.

The transit peptide at methionine 1–arginine 65 directs the protein to the mitochondrion. The interval isoleucine 182 to valine 250 is nifU. Cysteine 219 and cysteine 222 together coordinate [4Fe-4S] cluster.

The protein belongs to the NifU family.

Its subcellular location is the mitochondrion. In terms of biological role, molecular scaffold for [Fe-S] cluster assembly of mitochondrial iron-sulfur proteins. This chain is NFU1 iron-sulfur cluster scaffold homolog, mitochondrial, found in Drosophila simulans (Fruit fly).